Reading from the N-terminus, the 234-residue chain is Coiled-coil domain-containing protein 194 (234 aa).

The signal sequence occupies residues Met1–Ala43. Residues Arg44–Ser63 are disordered. The stretch at Val67–Ala171 forms a coiled coil. Residues Gly194–Gln234 are disordered. A compositionally biased stretch (basic residues) spans Arg203–Lys219.

The chain is Coiled-coil domain-containing protein 194 from Mus musculus (Mouse).